We begin with the raw amino-acid sequence, 255 residues long: 5-oxoprolinase subunit A 2 (255 aa).

This sequence belongs to the LamB/PxpA family. As to quaternary structure, forms a complex composed of PxpA, PxpB and PxpC.

The enzyme catalyses 5-oxo-L-proline + ATP + 2 H2O = L-glutamate + ADP + phosphate + H(+). Functionally, catalyzes the cleavage of 5-oxoproline to form L-glutamate coupled to the hydrolysis of ATP to ADP and inorganic phosphate. This Agrobacterium fabrum (strain C58 / ATCC 33970) (Agrobacterium tumefaciens (strain C58)) protein is 5-oxoprolinase subunit A 2.